Reading from the N-terminus, the 404-residue chain is MLRWTTAGESHGRALVAVLEGMVAGVSLTTEDIGAQLRRRRLGYGRGARMKFEQDEITMLGGVRHGVTLGGPIAIQIGNTEWPKWETVMAADPVDPAELAEIARNAPLTRPRPGHADYAGMLKYGFDDARPVLERASARETAARVAAGTVARAFLRQALGVEVVSHVISIGASTPYDGPPPQPADLTAIDDSPVRAFDEAAEKSMIAEIEAAKRDGDTLGGVVEVVVSGLPVGLGSFTSGDNRLDSQLAAAVMGIQAIKGVEIGDGFETARRRGSVAHDEIYPGPDGVVRSTNRAGGLEGGMTNGQPLRVRAAMKPISTVPRALATVDMTTGDEAVAIHQRSDVCAVPAAGVVVETMVALVLARAALQKFGGDSLTETRTNVESYLRAVAAREPATAQRAQASG.

Residues Arg-40 and Arg-46 each coordinate NADP(+). FMN-binding positions include 135 to 137, 256 to 257, Gly-300, 315 to 319, and Arg-341; these read RAS, QA, and KPIST.

The protein belongs to the chorismate synthase family. As to quaternary structure, homotetramer. The cofactor is FMNH2.

The enzyme catalyses 5-O-(1-carboxyvinyl)-3-phosphoshikimate = chorismate + phosphate. The protein operates within metabolic intermediate biosynthesis; chorismate biosynthesis; chorismate from D-erythrose 4-phosphate and phosphoenolpyruvate: step 7/7. Catalyzes the anti-1,4-elimination of the C-3 phosphate and the C-6 proR hydrogen from 5-enolpyruvylshikimate-3-phosphate (EPSP) to yield chorismate, which is the branch point compound that serves as the starting substrate for the three terminal pathways of aromatic amino acid biosynthesis. This reaction introduces a second double bond into the aromatic ring system. This chain is Chorismate synthase, found in Mycobacterium sp. (strain JLS).